A 294-amino-acid chain; its full sequence is Type I ribosome-inactivating protein trichoanguina (294 aa).

The signal sequence occupies residues 1 to 19; it reads MALSFFFLAISLGSPTAIG. Residue asparagine 70 is glycosylated (N-linked (GlcNAc...) asparagine). Residues glutamate 177 and arginine 180 contribute to the active site. N-linked (GlcNAc...) asparagine glycosylation occurs at asparagine 220. The propeptide occupies 265 to 294; it reads VGSEYDIPTTILHPGAMGMLHNQNGNYVTM.

Belongs to the ribosome-inactivating protein family. Type 1 RIP subfamily.

It catalyses the reaction Endohydrolysis of the N-glycosidic bond at one specific adenosine on the 28S rRNA.. Functionally, inhibits protein synthesis by depurinating 28S rRNA in ribosomes. This chain is Type I ribosome-inactivating protein trichoanguina (TCA), found in Trichosanthes anguina (Snake gourd).